The sequence spans 326 residues: Cytosolic sulfotransferase 12 (326 aa).

Residue 75 to 80 (KSGTTW) coordinates 3'-phosphoadenylyl sulfate. The Proton acceptor role is filled by His140. 3'-phosphoadenylyl sulfate contacts are provided by residues Arg162, Ser170, Tyr228, and 290 to 292 (RKG).

It belongs to the sulfotransferase 1 family. In terms of assembly, dimer. As to expression, expressed in the aerial parts of seedlings, in roots, leaves and flowers. Not detected in stems and siliques.

It localises to the cytoplasm. Its function is as follows. Sulfotransferase that utilizes 3'-phospho-5'-adenylyl sulfate (PAPS) as sulfonate donor to catalyze the stereospecific sulfate conjugation of 24-epibrassinosteroids. Preferred substrates are 24-epicathasterone and 6-deoxo-24-epicathasterone. Low activity with 22-deoxy-24-epiteasterone. No activity with 24-epimers catasterone and brassinolide. Sulfonates salicylic acid. May be involved in detoxification. Enhances plant response to pathogen infection and contributes to long distance signaling in systemic acquired resistance (SAR). This chain is Cytosolic sulfotransferase 12 (SOT12), found in Arabidopsis thaliana (Mouse-ear cress).